A 929-amino-acid chain; its full sequence is LPS-assembly protein LptD (929 aa).

Residues 1 to 33 (MAVKSLVFRRKFPLLVTGSLLALQPVAALTVQA) form the signal peptide. Positions 58–101 (NLPPRPAHTATSVSTAAAGSSVSGSGGETVEAEPTQRLVTESGG) are disordered. Over residues 66–90 (TATSVSTAAAGSSVSGSGGETVEAE) the composition is skewed to low complexity.

This sequence belongs to the LptD family. In terms of assembly, component of the lipopolysaccharide transport and assembly complex. Interacts with LptE and LptA.

It is found in the cell outer membrane. In terms of biological role, together with LptE, is involved in the assembly of lipopolysaccharide (LPS) at the surface of the outer membrane. This Pseudomonas aeruginosa (strain LESB58) protein is LPS-assembly protein LptD.